The chain runs to 74 residues: Omega-filistatoxin-Kh1a (74 aa).

Post-translationally, contains 6 disulfide bonds. In terms of tissue distribution, expressed by the venom gland.

The protein resides in the secreted. In terms of biological role, potently blocks vertebrate calcium channels Cav1 and Cav2. Is the most active on Cav2.2/CACNA1B (from HEK) (IC(50)=2.3 nM), followed by Cav2.1/CACNA1A (IC(50)=4.3 nM), Cav2.2/CACNA1B (from oocyte) (IC(50)=14.4 nM), Cav1.2/CACNA1C (IC(50)=26.8 nM), and Cav2.3/CACNA1E (IC(50)=96.4 nM). The polypeptide is Omega-filistatoxin-Kh1a (Kukulcania hibernalis (Southern house spider)).